We begin with the raw amino-acid sequence, 307 residues long: Olfactory receptor 8K5 (307 aa).

Over 1–25 (MGQHNLTVLTEFILMELTRRPELQI) the chain is Extracellular. N-linked (GlcNAc...) asparagine glycosylation is present at Asn-5. A helical membrane pass occupies residues 26 to 46 (PLFGVFLVIYLITVVGNLTMI). At 47 to 54 (ILTKLDSH) the chain is on the cytoplasmic side. Residues 55–75 (LHTPMYFSIRHLAFVDLGNST) form a helical membrane-spanning segment. At 76–99 (VICPKVLANFVVDRNTISYYACAA) the chain is on the extracellular side. An intrachain disulfide couples Cys-97 to Cys-189. The helical transmembrane segment at 100 to 120 (QLAFFLMFIISEFFILSAMAY) threads the bilayer. The Cytoplasmic segment spans residues 121–139 (DRYVAICNPLLYYVIMSQR). The helical transmembrane segment at 140-160 (LCHVLVGIQYLYSTFQALMFT) threads the bilayer. Over 161-197 (IKIFTLTFCGSNVISHFYCDDVPLLPMLCSNAQEIEL) the chain is Extracellular. The chain crosses the membrane as a helical span at residues 198–217 (LSILFSVFNLISSFLIVLVS). Residues 218-237 (YMLILLAICQMHSAEGRKKA) lie on the Cytoplasmic side of the membrane. The chain crosses the membrane as a helical span at residues 238–258 (FSTCGSHLTVVVVFYGSLLFM). The Extracellular segment spans residues 259 to 271 (YMQPNSTHFFDTD). The N-linked (GlcNAc...) asparagine glycan is linked to Asn-263. The helical transmembrane segment at 272–292 (KMASVFYTLVIPMLNPLIYSL) threads the bilayer. Topologically, residues 293-307 (RNEEVKNAFYKLFEN) are cytoplasmic.

It belongs to the G-protein coupled receptor 1 family.

It is found in the cell membrane. Odorant receptor. The sequence is that of Olfactory receptor 8K5 (OR8K5) from Homo sapiens (Human).